The primary structure comprises 896 residues: NEDD4-binding protein 1 (896 aa).

Positions 59–143 constitute a KH-like domain; that stretch reads QEAVHSAKEY…IQQFVKLFEN (85 aa). At S226 the chain carries Phosphoserine. T242 is subject to Phosphothreonine. Residues S258 and S300 each carry the phosphoserine modification. Disordered regions lie at residues 403 to 430 and 488 to 507; these read YPETNKTKNKGVYSSTNELTTDSTPKKT and ETDGLSPSVASPSPKEVNFV. Over residues 414–430 the composition is skewed to polar residues; the sequence is VYSSTNELTTDSTPKKT. S562 carries the post-translational modification Phosphoserine. The RNase NYN domain maps to 617–769; that stretch reads LKHIVIDGSN…LGRSGPRLEE (153 aa). The tract at residues 801–821 is disordered; it reads GTQAASTSHQPPTRIQGAPSS. Residues 803-813 show a composition bias toward polar residues; that stretch reads QAASTSHQPPT. The segment at 849-896 is coCUN; it reads RSSAETNELREALLKIFPDSEQRLKIDQILVAHPYMKDLNALSAMVLD.

It belongs to the N4BP1 family. As to quaternary structure, interacts with NEDD4. Interacts with ITCH (via WW domain 2). Post-translationally, proteolytically cleaved by CASP8 downstream of TLR3 or TLR4, leading to its inactivation. Mainly cleaved at Asp-490 by CASP8. Cleaved by caspase-like protein MALT1 in T-cells following TCR-mediated activation, leading to its inactivation and subsequent viral reactivation during HIV-1 infection. Mono- and polyubiquitinated on the CoCUN region. Monoubiquitinated by NEDD4. Polyubiquitinated, leading to its degradation by the proteasome. Sumoylated with SUMO1, abrogating polyubiquitination and subsequent degradation. Desumoylated by SENP1, leading to accumulation in PML nuclear bodies. Detected in heart, lung, brain, liver, skeletal muscle, pancreas, kidney, spleen, testis and ovary.

The protein localises to the cytoplasm. It localises to the cytosol. The protein resides in the nucleus. Its subcellular location is the nucleolus. It is found in the PML body. With respect to regulation, proteolytic cleavage by CASP8 or MALT1 leads to its inactivation. Functionally, potent suppressor of cytokine production that acts as a regulator of innate immune signaling and inflammation. Acts as a key negative regulator of select cytokine and chemokine responses elicited by TRIF-independent Toll-like receptors (TLRs), thereby limiting inflammatory cytokine responses to minor insults. In response to more threatening pathogens, cleaved by CASP8 downstream of TLR3 or TLR4, leading to its inactivation, thereby allowing production of inflammatory cytokines. Acts as a restriction factor against some viruses, such as HIV-1: restricts HIV-1 replication by binding to HIV-1 mRNAs and mediating their degradation via its ribonuclease activity. Also acts as an inhibitor of the E3 ubiquitin-protein ligase ITCH: acts by interacting with the second WW domain of ITCH, leading to compete with ITCH's substrates and impairing ubiquitination of substrates. The sequence is that of NEDD4-binding protein 1 from Homo sapiens (Human).